We begin with the raw amino-acid sequence, 328 residues long: Ribosomal RNA small subunit methyltransferase H (328 aa).

S-adenosyl-L-methionine contacts are provided by residues 37 to 39 (GGH), Asp57, Phe83, Asp104, and Gln111.

Belongs to the methyltransferase superfamily. RsmH family.

It localises to the cytoplasm. The enzyme catalyses cytidine(1402) in 16S rRNA + S-adenosyl-L-methionine = N(4)-methylcytidine(1402) in 16S rRNA + S-adenosyl-L-homocysteine + H(+). Functionally, specifically methylates the N4 position of cytidine in position 1402 (C1402) of 16S rRNA. This is Ribosomal RNA small subunit methyltransferase H from Neisseria meningitidis serogroup C / serotype 2a (strain ATCC 700532 / DSM 15464 / FAM18).